The sequence spans 874 residues: MYQTTAALRSAFLEYFRTNGHQVVDSSSLVPANDPTLLFTNAGMNQFKDVFLGADKRSYSRATSSQRCVRAGGKHNDLDNVGYTARHHTFFEMLGNFSFGDYFKEEAIHFAWTFLTEELKLPKERLCVTIYETDDEAFEIWNKKIGVAAENIIRIGDNKGAAYASDNFWQMGDTGPCGPCSEIFYDHGDHIWGGRPGTPEEDGDRFIEIWNIVFMQYNRQADGEMKPLPKPSVDTGMGIERIAAIMQGVHSNYEIDIFQALIKKTAAILGVTDLENKSLRVIADHIRSCAFLIADGVMPSNEGRGYVLRRIIRRAVRHGNKLGATESFFYKLVPTLIEVMGDAAKGLQETQAIVEKSLKAEEEQFARTLERGLGILDAALNELTTKVLDGETAFKLYDTYGFPVDLTADVCREREITVDEAGFEAAMAEQRKRAQAAGQFDTDYNEGLKIDEQSSFTGYTELNNQATVTAIFKSGEAAETITAGDEAVIVLDNTPFYGESGGQSGDKGVLIADGIEFTVIDTQKYGQAIGHIGRVVTGEIKAGQSLTANVDKKLRHRTELNHSVTHLLHAALRQVLGAHVSQKGSLVDPERLRFDFSHFEGVKANELKEVEELVNTQIRRNHELTAEVMDIETAKEKGAMALFGEKYDSEVRVVTMGDFSIELCGGTHVGRTGDIGLFKITSEGGIAAGIRRIEAVTGAAAMAYVAKQQAQLEEAATLLKGDSASVVAKLKAQLDKTKQLEKELSQLKDKLAAATSADLAGEAVEVNGVKVLVKKLEGVDAGALRGLQDELKQKLQSGIVVLAIAGEDKVNLIVGVTKDLTGKVKAGELVASIAVQVGGKGGGRPDMAQAGGSQPENLDGALEQVIPWITAKLS.

His562, His566, Cys664, and His668 together coordinate Zn(2+).

It belongs to the class-II aminoacyl-tRNA synthetase family. It depends on Zn(2+) as a cofactor.

The protein resides in the cytoplasm. The catalysed reaction is tRNA(Ala) + L-alanine + ATP = L-alanyl-tRNA(Ala) + AMP + diphosphate. Catalyzes the attachment of alanine to tRNA(Ala) in a two-step reaction: alanine is first activated by ATP to form Ala-AMP and then transferred to the acceptor end of tRNA(Ala). Also edits incorrectly charged Ser-tRNA(Ala) and Gly-tRNA(Ala) via its editing domain. In Shewanella halifaxensis (strain HAW-EB4), this protein is Alanine--tRNA ligase.